The following is a 523-amino-acid chain: Probable DNA ligase (523 aa).

Position 210 (E210) interacts with ATP. K212 acts as the N6-AMP-lysine intermediate in catalysis. Residues R217, R232, E261, F317, R388, and K394 each coordinate ATP.

This sequence belongs to the ATP-dependent DNA ligase family. Requires Mg(2+) as cofactor.

It carries out the reaction ATP + (deoxyribonucleotide)n-3'-hydroxyl + 5'-phospho-(deoxyribonucleotide)m = (deoxyribonucleotide)n+m + AMP + diphosphate.. DNA ligase that seals nicks in double-stranded DNA during DNA replication, DNA recombination and DNA repair. The chain is Probable DNA ligase from Nocardia farcinica (strain IFM 10152).